Consider the following 2036-residue polypeptide: Transmembrane channel-like protein (2036 aa).

Disordered regions lie at residues 1–178 (MQND…IDDE) and 194–243 (SVRG…ESTQ). Residues 1–353 (MQNDEEPAAA…GVASYFTFLR (353 aa)) are Cytoplasmic-facing. The span at 58–73 (VGSSSSNGNTSNVATG) shows a compositional bias: low complexity. Over residues 74–90 (ANSENNSGVTSPHQLSV) the composition is skewed to polar residues. Residues 125–134 (ASQEDHRSYE) are compositionally biased toward basic and acidic residues. Over residues 166–178 (FDEDGGGGDIDDE) the composition is skewed to acidic residues. The segment covering 198-208 (YRGKRGSRSSR) has biased composition (basic residues). Over residues 216–225 (HVLDSVERRR) the composition is skewed to basic and acidic residues. Residues 227 to 243 (SVYTTSSEEGTNQESTQ) show a composition bias toward polar residues. A helical membrane pass occupies residues 354-374 (WLMWVNIMIAIPLVAFVIGPE). The Extracellular portion of the chain corresponds to 375-395 (YFATKHGETDPRKRMSDPEAR). Residues 396-418 (VAGNLFTFWEFEGYLKYSPMFYG) traverse the membrane as a helical segment. Over 419 to 432 (YYSSTSGISTSGYK) the chain is Cytoplasmic. The chain crosses the membrane as a helical span at residues 433-453 (LPLAYFLTAVLVYIYSFVATL). The Extracellular portion of the chain corresponds to 454 to 526 (RKMAENSRNS…NRNWRVILQR (73 aa)). Residues 527–547 (ILVNILVMGLLGLSGATVVLL) form a helical membrane-spanning segment. At 548–567 (VNHSEDLAKHDNWLSRNAVN) the chain is on the cytoplasmic side. The chain crosses the membrane as a helical span at residues 568–588 (VTMTLLSFFLPMIFEALGLFE). At 589 to 599 (NWHPRQQLRLQ) the chain is on the extracellular side. A helical membrane pass occupies residues 600–620 (LARIMILNMLNLYSLMFSFIY). Over 621–1308 (KINSKEKPLQ…ILTLINNQGQ (688 aa)) the chain is Cytoplasmic. 5 disordered regions span residues 789–839 (TTAT…TEAT), 860–967 (KPLG…TDQA), 996–1027 (FFTSKYSRRHRNESAVSAGQPRETTESVNATP), 1066–1143 (LRGR…EGSE), and 1186–1205 (GSTTESPDSTTQSSDSKQLT). The span at 870–885 (IPNSTTNSATLSTIPA) shows a compositional bias: polar residues. Residues 886-906 (TLNTTNLPLNSTTKLTTTTST) show a composition bias toward low complexity. Over residues 933 to 952 (TSDAPDNNSYSDITDYSSEP) the composition is skewed to polar residues. Positions 953–967 (SEIEDFDEQESTDQA) are enriched in acidic residues. 3 stretches are compositionally biased toward low complexity: residues 1069 to 1083 (RITTTTSTSTTSTTT), 1091 to 1100 (RTTTTELTST), and 1107 to 1130 (TTESSTDSSSPGSTTNAFDSSSST). The helical transmembrane segment at 1309–1329 (VWMGIFFSPGLVLINLVKLMI) threads the bilayer. The Extracellular portion of the chain corresponds to 1330–1358 (MMYFRSWIVLTCNVPHEVVFKASKSNNFY). A helical transmembrane segment spans residues 1359–1379 (LSLLLTMLFLCVLPVGYAIVW). At 1380–1423 (LRPSWHCGPFSEYNRIAEFITNTTRNALPKQLHEPLDYLTSSST) the chain is on the cytoplasmic side. Residues 1424–1444 (VIPLLLLLILIIYYLVSLTGA) traverse the membrane as a helical segment. The Extracellular portion of the chain corresponds to 1445–2036 (LREANQDLRT…RIDIENEHEK (592 aa)). Disordered regions lie at residues 1527–1572 (LRKG…SRLQ), 1592–1841 (ERAR…SRQG), and 1859–1990 (KKDD…IPTI). Composition is skewed to basic and acidic residues over residues 1538 to 1566 (SFVRRDDDDTDTEHQDSLPHDEEAKDKRF), 1614 to 1640 (KETHPKSRFKVEKHERKDRGSMKDKKD), 1658 to 1668 (SPKDNEHDPDT), 1727 to 1743 (HIVDEKKPPPHEVEDKP), and 1777 to 1793 (PEPEVFKFDERSVERSS). Polar residues predominate over residues 1806-1838 (NEPSGTEEQDRSLPSPTPSQGQGHHQRQLSVLS). Positions 1890–1899 (VLSSVSSSTA) are enriched in low complexity. Residues 1903–1914 (PPTPEPESPTPS) show a composition bias toward pro residues. The segment covering 1976–1990 (QDSQSSIWSDNIPTI) has biased composition (polar residues).

The protein belongs to the TMC family. As to expression, expressed in multi-dendritic neurons of the labellum (md-L), which extend elaborate dendritic arbors innervating the bases of taste hairs (at protein level). In larvae, expressed in class I and class II dendritic arborization (da) neurons and bipolar dendrite (bd) neurons (at protein level). In adults, expressed in various sensory neurons including those in the mouth parts, olfactory neurons in the antenna, wing bristle neurons, haltere neurons, arista neurons, and many other sensory neurons, including a subset of chordotonal (Cho) neurons. Expressed in md-L axon terminals, including those that project into the subesophageal zone (SEZ). Also expressed in a small number of local neurons in the adult ventral nerve cord (VNC), and projections extending from a few neurons in the legs or wing hinges. In the adult mouth, expressed in a few multi-dendritic neurons of the ventral cibarial sensory organ (VCSO); the multiple elaborate dendritic branches form a brush-like structure that faces the luminal side of the food-passing tunnel. Also expressed in the oviduct and uterus of adult females.

Its subcellular location is the cell membrane. It is found in the cell projection. The protein localises to the dendrite. Probable ion channel. Component of mechanosensitive neurons that participates in proprioception, sensing food texture, and directing egg-laying site selection (oviposition). Component of multi-dendritic neurons of the labellum (md-L) where it is required for sensing the hardness and viscosity of their food, enabling them to behaviorally discriminate their preferred softness and smoothness from harder and stickier food options. Required as part of oviposition site selection process to relay mechanosensory and chemosensory information on the hardness and sweetness of potential egg-laying substrates, thus ensuring females select the most optimal site for their eggs survival. Females determine the softest substrate for their eggs first by making a coarse evaluation of substrate hardness using mechanosensitive channels nan and Piezo in the leg tarsal bristles, followed by a much finer assessment using nan, iav and Tmc mechanosensitive channels on the labellum. This protein is required to sense subtle differences in substrate stiffness (between 0.25% and 0.3% agarose), likely acting in the md-L neurons. Also required in neurons on the labellum, including the md-Ls, and possibly in the brain, to inhibit discrimination of egg-laying substrates of different hardness if the substrate contains sucrose. During oviposition evaluation, activation of sweet neurons by sucrose enhances the activity of the Tmc neurons resulting in females losing their softness preference in favor of egg-laying sites that contain sucrose. Acts in the larvae peripheral sensory neurons, to contribute to proprioception and sensory feedback for normal forward crawling behavior. Required for the normal activity of the proprioceptive sensory dendrites, ddaE which show preferential responses to forward locomotion, and ddaD which show preferential responses to backward locomotion. The protein is Transmembrane channel-like protein of Drosophila melanogaster (Fruit fly).